A 146-amino-acid polypeptide reads, in one-letter code: 1,4-dihydroxy-2-naphthoyl-CoA hydrolase (146 aa).

Asp19 is an active-site residue.

Belongs to the 4-hydroxybenzoyl-CoA thioesterase family. DHNA-CoA hydrolase subfamily.

It catalyses the reaction 1,4-dihydroxy-2-naphthoyl-CoA + H2O = 1,4-dihydroxy-2-naphthoate + CoA + H(+). The protein operates within cofactor biosynthesis; phylloquinone biosynthesis. It functions in the pathway quinol/quinone metabolism; 1,4-dihydroxy-2-naphthoate biosynthesis; 1,4-dihydroxy-2-naphthoate from chorismate: step 7/7. In terms of biological role, catalyzes the hydrolysis of 1,4-dihydroxy-2-naphthoyl-CoA (DHNA-CoA) to 1,4-dihydroxy-2-naphthoate (DHNA), a reaction involved in phylloquinone (vitamin K1) biosynthesis. The sequence is that of 1,4-dihydroxy-2-naphthoyl-CoA hydrolase from Thermosynechococcus vestitus (strain NIES-2133 / IAM M-273 / BP-1).